A 432-amino-acid polypeptide reads, in one-letter code: uncharacterized protein (432 aa).

Polar residues predominate over residues 1-14; the sequence is MSDTTDVPENQKSP. The disordered stretch occupies residues 1–42; that stretch reads MSDTTDVPENQKSPKPSGKADKRKIEEKPENSSLKRKKFEDP. Basic and acidic residues predominate over residues 18 to 30; that stretch reads GKADKRKIEEKPE. An S4 RNA-binding domain is found at 85–148; the sequence is RKMVEVFSGE…HEHPIRDLPI (64 aa). Aspartate 199 is a catalytic residue.

The protein belongs to the pseudouridine synthase RluA family.

This is an uncharacterized protein from Caenorhabditis elegans.